The following is a 194-amino-acid chain: MGPSGAGTRGGQAQFQWEEVRNDKQKGRYLGQSIYAASGRWAEGKDLEWWSKGRTTQSAINSENSDKEKYKKEILEIKEREQRMLAEALGLPQPSALALTSSKAANRSSTNTEKDSRSIAHSTSRSRSTSPANRHRRKEKERTRSNHRHGSHRRHEPYRTHLSRHHRHSTTNYHSKRDDRYERRREHSPNDGGS.

2 disordered regions span residues 52–71 and 86–194; these read KGRT…EKYK and AEAL…DGGS. Polar residues-rich tracts occupy residues 53 to 63, 98 to 111, and 119 to 132; these read GRTTQSAINSE, ALTS…SSTN, and IAHS…TSPA. Positions 133–169 are enriched in basic residues; it reads NRHRRKEKERTRSNHRHGSHRRHEPYRTHLSRHHRHS. Positions 175-194 are enriched in basic and acidic residues; sequence SKRDDRYERRREHSPNDGGS.

This is an uncharacterized protein from Schizosaccharomyces pombe (strain 972 / ATCC 24843) (Fission yeast).